We begin with the raw amino-acid sequence, 573 residues long: Sulfite reductase [NADPH] hemoprotein beta-component (573 aa).

4 residues coordinate [4Fe-4S] cluster: Cys438, Cys444, Cys483, and Cys487. Cys487 is a binding site for siroheme.

It belongs to the nitrite and sulfite reductase 4Fe-4S domain family. In terms of assembly, alpha(8)-beta(8). The alpha component is a flavoprotein, the beta component is a hemoprotein. It depends on siroheme as a cofactor. [4Fe-4S] cluster serves as cofactor.

The enzyme catalyses hydrogen sulfide + 3 NADP(+) + 3 H2O = sulfite + 3 NADPH + 4 H(+). The protein operates within sulfur metabolism; hydrogen sulfide biosynthesis; hydrogen sulfide from sulfite (NADPH route): step 1/1. Functionally, component of the sulfite reductase complex that catalyzes the 6-electron reduction of sulfite to sulfide. This is one of several activities required for the biosynthesis of L-cysteine from sulfate. The sequence is that of Sulfite reductase [NADPH] hemoprotein beta-component from Staphylococcus haemolyticus (strain JCSC1435).